Here is a 153-residue protein sequence, read N- to C-terminus: UPF0756 membrane protein LCA_1031 (153 aa).

Transmembrane regions (helical) follow at residues 4–24 (WLFLAAILIVALLAKNQSLII), 52–72 (WGVTVISVAILVPIATGQIGF), 85–105 (FIAVGCGVLVAVLSAKGVGLL), and 115–135 (LVFGTIMGVVFLKGIAAGPVI).

This sequence belongs to the UPF0756 family.

It localises to the cell membrane. The protein is UPF0756 membrane protein LCA_1031 of Latilactobacillus sakei subsp. sakei (strain 23K) (Lactobacillus sakei subsp. sakei).